The primary structure comprises 73 residues: Cytoplasmic envelopment protein 3 (73 aa).

Residue Gly-2 is the site of N-myristoyl glycine; by host attachment.

Belongs to the herpesviridae cytoplasmic envelopment protein 3 family. In terms of assembly, interacts with cytoplasmic envelopment protein 2; this interaction is essential for the proper localization of each protein to the assembly complex and thus for the production of infectious virus. Myristoylation and palmitoylation (probably on one or more of the nearby cysteines at the N-terminus) enable membrane-binding and Golgi apparatus-specific targeting and are essential for efficient packaging. Post-translationally, phosphorylated. Phosphorylation does not seem to be required for recycling to the host Golgi apparatus. Packaging is selective for underphosphorylated forms.

It localises to the virion tegument. The protein resides in the virion membrane. The protein localises to the host cell membrane. Its subcellular location is the host Golgi apparatus membrane. Plays an important role in the cytoplasmic envelopment of tegument proteins and capsids during the assembly and egress processes. Also participates in viral entry at the fusion step probably by regulating the core fusion machinery. This chain is Cytoplasmic envelopment protein 3 (U71), found in Homo sapiens (Human).